A 310-amino-acid chain; its full sequence is Thioredoxin reductase (310 aa).

34–41 (NGMQPGGQ) contacts FAD. Cysteine 135 and cysteine 138 are oxidised to a cystine. Position 281–290 (281–290 (DVQDKIYRQA)) interacts with FAD.

This sequence belongs to the class-II pyridine nucleotide-disulfide oxidoreductase family. Homodimer. It depends on FAD as a cofactor.

Its subcellular location is the cytoplasm. The catalysed reaction is [thioredoxin]-dithiol + NADP(+) = [thioredoxin]-disulfide + NADPH + H(+). The polypeptide is Thioredoxin reductase (trxB) (Rickettsia prowazekii (strain Madrid E)).